We begin with the raw amino-acid sequence, 125 residues long: Holo-[acyl-carrier-protein] synthase (125 aa).

Mg(2+) contacts are provided by Asp8 and Glu57.

Belongs to the P-Pant transferase superfamily. AcpS family. The cofactor is Mg(2+).

Its subcellular location is the cytoplasm. It carries out the reaction apo-[ACP] + CoA = holo-[ACP] + adenosine 3',5'-bisphosphate + H(+). Transfers the 4'-phosphopantetheine moiety from coenzyme A to a Ser of acyl-carrier-protein. The sequence is that of Holo-[acyl-carrier-protein] synthase from Dechloromonas aromatica (strain RCB).